The chain runs to 435 residues: Asparagine--tRNA ligase (435 aa).

Belongs to the class-II aminoacyl-tRNA synthetase family. In terms of assembly, homodimer.

It is found in the cytoplasm. The catalysed reaction is tRNA(Asn) + L-asparagine + ATP = L-asparaginyl-tRNA(Asn) + AMP + diphosphate + H(+). The polypeptide is Asparagine--tRNA ligase (Leptospira interrogans serogroup Icterohaemorrhagiae serovar Lai (strain 56601)).